The chain runs to 334 residues: MNISVNGQSQVPPGFRFHPTEEELLKYYLRKKISNIKIDLDVIPDIDLNKLEPWDIQEMCKIGTTPQNDWYFYSHKDKKYPTGTRTNRATTVGFWKATGRDKTIYTNGDRIGMRKTLVFYKGRAPHGQKSDWIMHEYRLDESVLISSCGDHDVNVETCDVIGSDEGWVVCRVFKKNNLCKNMISSSPASSVKTPSFNEETIEQLLEVMGQSCKGEIVLDPFLKLPNLECHNNTTITSYQWLIDDQVNNCHVSKVMDPSFITSWAALDRLVASQLNGPNSYSIPAVNETSQSPYHGLNRSGCNTGLTPDYYIPEIDLWNEADFARTTCHLLNGSG.

The NAC domain maps to V11–K175. The DNA-binding element occupies I111 to N181.

Mostly expressed in anthers. Also present in pollen, base of siliques and inflorescence stems.

It is found in the nucleus. Its function is as follows. Transcription activator of genes involved in biosynthesis of secondary walls. Together with NST1, required for the secondary cell wall thickening of the anther endocethium, which is necessary for anther dehiscence. May also regulate the secondary cell wall lignification of other tissues such as tracheary elements. The sequence is that of NAC domain-containing protein 66 (NAC066) from Arabidopsis thaliana (Mouse-ear cress).